We begin with the raw amino-acid sequence, 885 residues long: Probable LRR receptor-like serine/threonine-protein kinase At1g51820 (885 aa).

The N-terminal stretch at 1–20 is a signal peptide; it reads MERHFVFIATYLLIFHLVQA. Residues 21–509 lie on the Extracellular side of the membrane; that stretch reads QNQTGFISVD…GHKKKSVIVP (489 aa). N-linked (GlcNAc...) asparagine glycosylation is found at Asn-22, Asn-93, Asn-135, Asn-194, Asn-228, Asn-250, Asn-254, Asn-281, Asn-287, Asn-424, Asn-437, Asn-456, and Asn-461. LRR repeat units lie at residues 403 to 424, 427 to 447, and 451 to 473; these read IITSLDLSSSGLTGIITQAIKN, HLQILDLSDNNLTGEVPEFLA, and SLLVINLSGNNLSGSVPPSLLQK. Residues 510–530 form a helical membrane-spanning segment; sequence VVASIASIAVLIGALVLFLIL. Residues 531–885 are Cytoplasmic-facing; it reads RKKRSPKVEG…FGTEVSPNAR (355 aa). The Protein kinase domain maps to 578-851; sequence NNFQRILGKG…QVVIELNECL (274 aa). Residues 584–592 and Lys-606 each bind ATP; that span reads LGKGGFGMV. Tyr-651 is subject to Phosphotyrosine. Asp-703 functions as the Proton acceptor in the catalytic mechanism. Ser-737 carries the phosphoserine modification. Thr-738 and Thr-743 each carry phosphothreonine. Tyr-751 carries the post-translational modification Phosphotyrosine.

It belongs to the protein kinase superfamily. Ser/Thr protein kinase family.

The protein localises to the membrane. The enzyme catalyses L-seryl-[protein] + ATP = O-phospho-L-seryl-[protein] + ADP + H(+). It catalyses the reaction L-threonyl-[protein] + ATP = O-phospho-L-threonyl-[protein] + ADP + H(+). This Arabidopsis thaliana (Mouse-ear cress) protein is Probable LRR receptor-like serine/threonine-protein kinase At1g51820.